The chain runs to 378 residues: N-acetyllactosaminide beta-1,3-N-acetylglucosaminyltransferase 4 (378 aa).

At 1–28 (MLPPQPSAAHQGRGGRSGLLPKGPAMLC) the chain is on the cytoplasmic side. Residues 29–49 (RLCWLVSYSLAVLLLGCLLFL) traverse the membrane as a helical; Signal-anchor for type II membrane protein segment. At 50–378 (RKAAKPAGDP…KCAAGPIPQR (329 aa)) the chain is on the lumenal side. The segment at 59–81 (PTAHQPFWAPPTPRHSRCPPNHT) is disordered. The N-linked (GlcNAc...) asparagine glycan is linked to asparagine 192.

The protein belongs to the glycosyltransferase 31 family. As to expression, mainly expressed in brain tissues such as whole brain, hippocampus, amygdala, cerebellum and caudate nucleus. Also expressed in colon, esophagus and kidney.

It localises to the golgi apparatus membrane. It catalyses the reaction a beta-D-galactosyl-(1-&gt;4)-N-acetyl-beta-D-glucosaminyl derivative + UDP-N-acetyl-alpha-D-glucosamine = an N-acetyl-beta-D-glucosaminyl-(1-&gt;3)-beta-D-galactosyl-(1-&gt;4)-N-acetyl-beta-D-glucosaminyl derivative + UDP + H(+). It participates in protein modification; protein glycosylation. Functionally, beta-1,3-N-acetylglucosaminyltransferase involved in the synthesis of poly-N-acetyllactosamine. Has activity for type 2 oligosaccharides. The chain is N-acetyllactosaminide beta-1,3-N-acetylglucosaminyltransferase 4 (B3GNT4) from Homo sapiens (Human).